A 174-amino-acid polypeptide reads, in one-letter code: Type II secretion system protein M (174 aa).

Topologically, residues 1–32 (MKVMTQFHERLRAQAETSQLAIRWRGLPARDR) are cytoplasmic. The helical transmembrane segment at 33–52 (LALLWLGAFLLLVVLYLALW) threads the bilayer. The Periplasmic portion of the chain corresponds to 53–174 (RPAERHLQSA…VSARLSLRVE (122 aa)).

The protein belongs to the GSP M family. In terms of assembly, type II secretion system is composed of four main components: the outer membrane complex, the inner membrane complex, the cytoplasmic secretion ATPase and the periplasm-spanning pseudopilus. Forms homodimers. Interacts with XcpY/GspL. Interacts with XcpR/GspE and XcpS/GspF.

The protein localises to the cell inner membrane. Its function is as follows. Inner membrane component of the type II secretion system required for the energy-dependent secretion of extracellular factors such as proteases and toxins from the periplasm. Plays a role in the complex assembly and recruits XcpY resulting in a stable complex in the inner membrane. Provides thus a link between the energy-providing XcpR protein in the cytoplasm and the rest of the T2SS machinery. The sequence is that of Type II secretion system protein M (xcpZ) from Pseudomonas aeruginosa (strain ATCC 15692 / DSM 22644 / CIP 104116 / JCM 14847 / LMG 12228 / 1C / PRS 101 / PAO1).